A 244-amino-acid polypeptide reads, in one-letter code: Putative esophageal gland cell secretory protein 6 (244 aa).

Positions 1 to 22 (MDRRFTVFLVIALVTSIYEVLS) are cleaved as a signal peptide. Cysteines 88 and 91 form a disulfide.

This sequence belongs to the SelWTH family. SELT subfamily.

The sequence is that of Putative esophageal gland cell secretory protein 6 (HSP6) from Heterodera glycines (Soybean cyst nematode worm).